Consider the following 77-residue polypeptide: Acyl carrier protein (77 aa).

One can recognise a Carrier domain in the interval methionine 1–lysine 76. Serine 36 is modified (O-(pantetheine 4'-phosphoryl)serine).

Belongs to the acyl carrier protein (ACP) family. In terms of processing, 4'-phosphopantetheine is transferred from CoA to a specific serine of apo-ACP by AcpS. This modification is essential for activity because fatty acids are bound in thioester linkage to the sulfhydryl of the prosthetic group.

The protein resides in the cytoplasm. It participates in lipid metabolism; fatty acid biosynthesis. Carrier of the growing fatty acid chain in fatty acid biosynthesis. The chain is Acyl carrier protein from Campylobacter jejuni (strain RM1221).